The following is a 336-amino-acid chain: DNA repair protein RAD51 homolog A (336 aa).

The 30-residue stretch at 45–74 (TVEAVAYAPKKELLNIKGISEAKAEKILAE) folds into the HhH domain. 124-131 (GEFRTGKT) is an ATP binding site. The Nuclear export signal motif lies at 242-257 (LARFLRMLLRLADEFG).

The protein belongs to the RecA family. RAD51 subfamily. In terms of assembly, forms linear homooligomers, giving rise to a RAD51 nucleoprotein filament, which is essential for strand-pairing reactions during DNA recombination.

The protein resides in the nucleus. The protein localises to the cytoplasm. It is found in the chromosome. Its function is as follows. Plays an important role in homologous strand exchange, a key step in DNA repair through homologous recombination (HR). Binds to single-stranded DNA in an ATP-dependent manner to form nucleoprotein filaments which are essential for the homology search and strand exchange. Catalyzes the recognition of homology and strand exchange between homologous DNA partners to form a joint molecule between a processed DNA break and the repair template. Recruited to resolve stalled replication forks during replication stress. Also involved in interstrand cross-link repair. In Xenopus laevis (African clawed frog), this protein is DNA repair protein RAD51 homolog A (rad51-a).